The chain runs to 275 residues: Adenylate kinase (275 aa).

Residue 54-59 (GAGKGT) participates in ATP binding. The tract at residues 74–103 (ATGDMLRSQVAKKTPLGREAKKIMDQGGLV) is NMP. Residues Thr-75, Arg-80, 101 to 103 (GLV), 130 to 133 (GFPR), and Gln-137 each bind AMP. The interval 171–208 (GRLVHPASGRSYHRVFNPPKAEMKDDITGEPLVSRSDD) is LID. ATP is bound by residues Arg-172 and 181–182 (SY). 2 residues coordinate AMP: Arg-205 and Arg-216. ATP is bound at residue Gln-244.

Belongs to the adenylate kinase family. AK2 subfamily. As to quaternary structure, monomer.

It localises to the cytoplasm. The protein resides in the cytosol. It is found in the mitochondrion intermembrane space. It catalyses the reaction AMP + ATP = 2 ADP. In terms of biological role, catalyzes the reversible transfer of the terminal phosphate group between ATP and AMP. Plays an important role in cellular energy homeostasis and in adenine nucleotide metabolism. Adenylate kinase activity is critical for regulation of the phosphate utilization and the AMP de novo biosynthesis pathways. The polypeptide is Adenylate kinase (adk1) (Sclerotinia sclerotiorum (strain ATCC 18683 / 1980 / Ss-1) (White mold)).